The primary structure comprises 181 residues: Akirin-2 (181 aa).

Positions 18–48 (SPAASPKRRRCAPLSPSGPSPQKYLRLEPSP) are disordered. The short motif at 23–28 (PKRRRC) is the Nuclear localization signal element. An SYVS motif motif is present at residues 178 to 181 (SYVS).

Belongs to the akirin family. Homodimer. Interacts with actl6a/baf53a. Interacts with gmnn.

Its subcellular location is the nucleus. Its function is as follows. Molecular adapter that acts as a bridge between a variety of multiprotein complexes, and which is involved in embryonic development, immunity, myogenesis and brain development. Plays a key role in nuclear protein degradation by promoting import of proteasomes into the nucleus: acts by bridging fully assembled 20S proteasomes with nuclear import receptor ipo9. Involved in both neural precursor maintenance and terminal neural differentiation: bridges gmnn and actl6a/baf53a in neural progenitor cells, antagonizing the activity of gmnn, thereby suppressing sox2 expression. Also required for proper activation of neurod1 and neuronal differentiation. Involved in myogenesis: required for skeletal muscle formation and skeletal development, possibly by regulating expression of muscle differentiation factors. This chain is Akirin-2, found in Xenopus laevis (African clawed frog).